A 289-amino-acid chain; its full sequence is Aquaporin PIP1-2 (289 aa).

The interval 1-36 (MEGKEEDVRLGANKFSERQPIGTAAQGAADDKDYKE) is disordered. The next 2 membrane-spanning stretches (helical) occupy residues 58–78 (IAEF…VMGV) and 93–115 (IAWS…SGGH). The NPA 1 motif lies at 117–119 (NPA). Helical transmembrane passes span 136 to 156 (LFYI…VKGF), 178 to 198 (GDGL…VFSA), and 212 to 232 (ILAP…TIPI). The NPA 2 motif lies at 238 to 240 (NPA). The chain crosses the membrane as a helical span at residues 260–280 (IFWVGPFIGAALAAIYHQVII).

It belongs to the MIP/aquaporin (TC 1.A.8) family. PIP (TC 1.A.8.11) subfamily. Interacts with PIP2-1 to form heteromers. In terms of tissue distribution, highly expressed in developing tassels and at lower levels in roots, shoots, ears and embryos. Expressed in the root growing zone at 5-6 mm from the root tip. Expressed in xylem parenchyma.

The protein localises to the cell membrane. Functionally, water channel required to facilitate the transport of water across cell membrane. Active as heteromers with PIP1-1, PIP2-1, PIP2-4 or PIP2-5, but not as homomers. The chain is Aquaporin PIP1-2 (PIP1-2) from Zea mays (Maize).